We begin with the raw amino-acid sequence, 314 residues long: Dihydropteroate synthase (314 aa).

The region spanning 10 to 294 is the Pterin-binding domain; that stretch reads TVICGIINVT…DVASHRMAVE (285 aa). Asparagine 17 is a binding site for Mg(2+). Residues threonine 57, aspartate 91, asparagine 110, aspartate 201, lysine 237, and 282-284 contribute to the (7,8-dihydropterin-6-yl)methyl diphosphate site; that span reads RVH.

This sequence belongs to the DHPS family. Homodimer or homotrimer. The cofactor is Mg(2+).

The catalysed reaction is (7,8-dihydropterin-6-yl)methyl diphosphate + 4-aminobenzoate = 7,8-dihydropteroate + diphosphate. It participates in cofactor biosynthesis; tetrahydrofolate biosynthesis; 7,8-dihydrofolate from 2-amino-4-hydroxy-6-hydroxymethyl-7,8-dihydropteridine diphosphate and 4-aminobenzoate: step 1/2. Its function is as follows. Catalyzes the condensation of para-aminobenzoate (pABA) with 6-hydroxymethyl-7,8-dihydropterin diphosphate (DHPt-PP) to form 7,8-dihydropteroate (H2Pte), the immediate precursor of folate derivatives. This Streptococcus pneumoniae serotype 4 (strain ATCC BAA-334 / TIGR4) protein is Dihydropteroate synthase (sulA).